The primary structure comprises 590 residues: MNVYRTHLCNELREEHIDQTVTLSGWVYRKRDHGKIIFVDLRDHYGITQLVFNDSDTTIFQLITTLRLESVITIKGIVKARDSSTINETLDTGSIEVIVSSINIETASDILPINIASMQDYSEDIRLTYRFLDLRRDKVKNNIILRSKVITEIRKSMENMGFIEIQTPILTSSSPEGARDYLVPSRIHHGKFYALPQAPQLFKQLLMVSGFDKYFQIAPCFRDEDARADRSPGEFYQLDIEMSFVTQEDIFNIIEPLMINIFSKFSSKTINKEFPKISYHDAMLYYGSDKPDLRNPLVIQDVTEIFRDSEFKIFNSNIKQGMVVRAIPAPNTAHNPRSFFDSKIEFAKTLGAQGLGYITFIDDSLAKGPIAKFLDKDRLDNIKLICNIKAGDSVFFVSEIADKAALFAGEVRTLLGKELNLIEENTFKFCWVIDFPYFKYDHKEKSINFFHNPFSMPQGGLEALENQDPLNILAYQYDIVCNGIEISSGAIRNHKLNIMYKAFSIAGYTKEMVDEKFKALTRAFKFGAPPHGGIAPGIDRIVMLLADVPNIREVICFPLNQSGEDLLMGSPSEIDNDHLKLLSLNIIKKT.

Glutamate 176 contributes to the L-aspartate binding site. Residues 200-203 (QLFK) are aspartate. Positions 222 and 451 each coordinate L-aspartate. 222–224 (RDE) contributes to the ATP binding site. Glutamate 485 contacts ATP. Arginine 492 provides a ligand contact to L-aspartate. 537–540 (GIDR) provides a ligand contact to ATP.

Belongs to the class-II aminoacyl-tRNA synthetase family. Type 1 subfamily. In terms of assembly, homodimer.

It localises to the cytoplasm. It catalyses the reaction tRNA(Asx) + L-aspartate + ATP = L-aspartyl-tRNA(Asx) + AMP + diphosphate. Aspartyl-tRNA synthetase with relaxed tRNA specificity since it is able to aspartylate not only its cognate tRNA(Asp) but also tRNA(Asn). Reaction proceeds in two steps: L-aspartate is first activated by ATP to form Asp-AMP and then transferred to the acceptor end of tRNA(Asp/Asn). The polypeptide is Aspartate--tRNA(Asp/Asn) ligase (Ehrlichia ruminantium (strain Gardel)).